We begin with the raw amino-acid sequence, 360 residues long: DNA replication and repair protein RecF (360 aa).

ATP is bound at residue 30 to 37 (GNNGSGKT).

The protein belongs to the RecF family.

The protein localises to the cytoplasm. Functionally, the RecF protein is involved in DNA metabolism; it is required for DNA replication and normal SOS inducibility. RecF binds preferentially to single-stranded, linear DNA. It also seems to bind ATP. This chain is DNA replication and repair protein RecF, found in Mannheimia succiniciproducens (strain KCTC 0769BP / MBEL55E).